The following is a 78-amino-acid chain: Acyl carrier protein (78 aa).

The Carrier domain occupies 2–77; that stretch reads STIEERVKKI…AAIDFIQANQ (76 aa). O-(pantetheine 4'-phosphoryl)serine is present on S37.

This sequence belongs to the acyl carrier protein (ACP) family. In terms of processing, 4'-phosphopantetheine is transferred from CoA to a specific serine of apo-ACP by AcpS. This modification is essential for activity because fatty acids are bound in thioester linkage to the sulfhydryl of the prosthetic group.

The protein localises to the cytoplasm. It functions in the pathway lipid metabolism; fatty acid biosynthesis. Carrier of the growing fatty acid chain in fatty acid biosynthesis. This is Acyl carrier protein from Pectobacterium atrosepticum (strain SCRI 1043 / ATCC BAA-672) (Erwinia carotovora subsp. atroseptica).